Consider the following 120-residue polypeptide: MFLLYEYDIFWAFLIISSVIPILAFRISGLLAPTSKGPEKLSSYESGIEPMGDAWLQFRIRYYMFALVFVVFDVETIFLYPWALSFDILGVSVFIEALIFVLILVLGLVYAWRKGALEWS.

A run of 3 helical transmembrane segments spans residues 2 to 22, 64 to 84, and 88 to 108; these read FLLYEYDIFWAFLIISSVIPI, MFALVFVVFDVETIFLYPWAL, and ILGVSVFIEALIFVLILVLGL.

Belongs to the complex I subunit 3 family. As to quaternary structure, NDH is composed of at least 16 different subunits, 5 of which are encoded in the nucleus.

The protein localises to the plastid. It localises to the chloroplast thylakoid membrane. It carries out the reaction a plastoquinone + NADH + (n+1) H(+)(in) = a plastoquinol + NAD(+) + n H(+)(out). The catalysed reaction is a plastoquinone + NADPH + (n+1) H(+)(in) = a plastoquinol + NADP(+) + n H(+)(out). Functionally, NDH shuttles electrons from NAD(P)H:plastoquinone, via FMN and iron-sulfur (Fe-S) centers, to quinones in the photosynthetic chain and possibly in a chloroplast respiratory chain. The immediate electron acceptor for the enzyme in this species is believed to be plastoquinone. Couples the redox reaction to proton translocation, and thus conserves the redox energy in a proton gradient. The sequence is that of NAD(P)H-quinone oxidoreductase subunit 3, chloroplastic from Oenothera argillicola (Appalachian evening primrose).